The sequence spans 1219 residues: Polyamine-transporting ATPase 13A3 (1219 aa).

Over 1–28 (MDKEERKTINKGQEDEMEIHGYNLCRWK) the chain is Cytoplasmic. An intramembrane segment occupies 29–49 (LAMVFVGVICTGGFLLLLLYW). The Cytoplasmic portion of the chain corresponds to 50 to 201 (LPEWRVKATC…IAVKVPSVFK (152 aa)). A helical membrane pass occupies residues 202–222 (LLIKEVLNPFYIFQLFSVILW). At 223–228 (SVDEYY) the chain is on the lumenal side. A helical membrane pass occupies residues 229 to 249 (YYALAIVIMSVVSIISSLYSI). Over 250–405 (RKQYVMLHDM…KPTDFKLYRD (156 aa)) the chain is Cytoplasmic. A helical membrane pass occupies residues 406 to 426 (AYLFLLCLVVVAGIGFIYTII). The Lumenal portion of the chain corresponds to 427-444 (NSILNEKEVQEIIIKSLD). A helical membrane pass occupies residues 445–465 (IITITVPPALPAAMTAGIVYA). The Cytoplasmic segment spans residues 466 to 936 (QRRLKKVGIF…ALMTSFCVFK (471 aa)). Catalysis depends on Asp-494, which acts as the 4-aspartylphosphate intermediate. The Mg(2+) site is built by Asp-494 and Thr-496. ATP-binding positions include 494-496 (DKT), Phe-624, Arg-680, and Asp-746. Ser-813 is modified (phosphoserine). Positions 879 and 883 each coordinate Mg(2+). 879–883 (DGAND) is an ATP binding site. Residues 937 to 957 (FMALYSIIQYFSVTLLYSILS) form a helical membrane-spanning segment. Residue Asn-958 is a topological domain, lumenal. Residues 959–979 (LGDFQFLFIDLAIILVVVFTM) form a helical membrane-spanning segment. The Cytoplasmic portion of the chain corresponds to 980–995 (SLNPAWKELVAQRPPS). Residues 996 to 1016 (GLISGALLFSVLSQIVISVGF) form a helical membrane-spanning segment. Residues 1017 to 1066 (QSLGFFWVKQYKVCDPNSDVCNTTRSACWNSSHLYNGTELDSCKIQNYEN) are Lumenal-facing. A helical membrane pass occupies residues 1067–1087 (TTVFFISSFQYLTVAVAFSKG). Topologically, residues 1088 to 1098 (KPFRQPCYKNY) are cytoplasmic. A helical membrane pass occupies residues 1099 to 1119 (FFVISVIILYVFILFIMLHPV). Residues 1120–1136 (ASVDQVLEIMCVPYQWR) are Lumenal-facing. The helical transmembrane segment at 1137–1157 (IYMLIIVLINAFVSITVEESV) threads the bilayer. The Cytoplasmic portion of the chain corresponds to 1158–1219 (DRWGKCCLSW…NGSCQIITIA (62 aa)).

Belongs to the cation transport ATPase (P-type) (TC 3.A.3) family. Type V subfamily. In terms of tissue distribution, expression is greatest in liver, followed by kidney, colon, stomach, brain and small intestine. Isoform 1 is highly expressed in the kidney while isoform 2 is highly expressed in the brain.

The protein localises to the recycling endosome membrane. It localises to the early endosome membrane. It is found in the late endosome membrane. It carries out the reaction putrescine(out) + ATP + H2O = putrescine(in) + ADP + phosphate + H(+). ATP-driven pump involved in endocytosis-dependent polyamine transport. Uses ATP as an energy source to transfer polyamine precursor putrescine from the endosomal compartment to the cytosol. In Mus musculus (Mouse), this protein is Polyamine-transporting ATPase 13A3.